A 212-amino-acid chain; its full sequence is Uridine kinase (212 aa).

13–20 (GASASGKS) contributes to the ATP binding site.

It belongs to the uridine kinase family.

The protein localises to the cytoplasm. The catalysed reaction is uridine + ATP = UMP + ADP + H(+). It carries out the reaction cytidine + ATP = CMP + ADP + H(+). It functions in the pathway pyrimidine metabolism; CTP biosynthesis via salvage pathway; CTP from cytidine: step 1/3. Its pathway is pyrimidine metabolism; UMP biosynthesis via salvage pathway; UMP from uridine: step 1/1. In Psychromonas ingrahamii (strain DSM 17664 / CCUG 51855 / 37), this protein is Uridine kinase.